A 241-amino-acid chain; its full sequence is Chlorophyll a-b binding protein 6, chloroplastic (241 aa).

The N-terminal 35 residues, methionine 1 to asparagine 35, are a transit peptide targeting the chloroplast. Tryptophan 48 lines the chlorophyll b pocket. 3 residues coordinate chlorophyll a: phenylalanine 68, glutamate 87, and histidine 90. Arginine 92 is a binding site for chlorophyll b. The chain crosses the membrane as a helical span at residues tryptophan 93 to valine 113. Leucine 129 lines the chlorophyll a pocket. Residues proline 132–valine 152 traverse the membrane as a helical segment. 3 residues coordinate chlorophyll b: valine 133, glutamate 153, and arginine 156. Positions 190, 191, 194, 196, 208, and 224 each coordinate chlorophyll a. Residues leucine 197–proline 217 form a helical membrane-spanning segment.

This sequence belongs to the light-harvesting chlorophyll a/b-binding (LHC) protein family. The LHC complex consists of chlorophyll a-b binding proteins. Red-emitting heterodimer with LHCA4. Interacts with LHCA5. The cofactor is Binds at least 14 chlorophylls (8 Chl-a and 6 Chl-b) and carotenoids such as lutein and neoxanthin.. In terms of processing, photoregulated by reversible phosphorylation of its threonine residues.

It is found in the plastid. It localises to the chloroplast thylakoid membrane. The light-harvesting complex (LHC) functions as a light receptor, it captures and delivers excitation energy to photosystems with which it is closely associated. This Arabidopsis thaliana (Mouse-ear cress) protein is Chlorophyll a-b binding protein 6, chloroplastic.